The chain runs to 648 residues: Phosphomethylpyrimidine synthase (648 aa).

Substrate contacts are provided by residues N236, M265, Y294, H330, 350–352 (SRG), 391–394 (DGLR), and E430. H434 lines the Zn(2+) pocket. Residue Y457 coordinates substrate. Residue H498 participates in Zn(2+) binding. [4Fe-4S] cluster is bound by residues C578, C581, and C586.

This sequence belongs to the ThiC family. In terms of assembly, homodimer. [4Fe-4S] cluster is required as a cofactor.

It catalyses the reaction 5-amino-1-(5-phospho-beta-D-ribosyl)imidazole + S-adenosyl-L-methionine = 4-amino-2-methyl-5-(phosphooxymethyl)pyrimidine + CO + 5'-deoxyadenosine + formate + L-methionine + 3 H(+). Its pathway is cofactor biosynthesis; thiamine diphosphate biosynthesis. Catalyzes the synthesis of the hydroxymethylpyrimidine phosphate (HMP-P) moiety of thiamine from aminoimidazole ribotide (AIR) in a radical S-adenosyl-L-methionine (SAM)-dependent reaction. This is Phosphomethylpyrimidine synthase from Aliivibrio salmonicida (strain LFI1238) (Vibrio salmonicida (strain LFI1238)).